The sequence spans 312 residues: Olfactory receptor-like protein COR5 (312 aa).

Residues 1–26 (MALGNCTTPTTFILSGLTDNPRLQMP) are Extracellular-facing. N-linked (GlcNAc...) asparagine glycosylation occurs at Asn-5. Residues 27 to 49 (LFMVFLAIYTITLLANLGLIALI) traverse the membrane as a helical segment. Residues 50-57 (SVDFHLQT) lie on the Cytoplasmic side of the membrane. Residues 58–79 (PMYIFLQNLSFTDAAYSTVITP) traverse the membrane as a helical segment. Topologically, residues 80–100 (KMLATFLEERRTISYVGCILQ) are extracellular. A disulfide bond links Cys-97 and Cys-179. A helical membrane pass occupies residues 101–120 (YFSFVLLTSSECLLLAVMAY). At 121 to 139 (DRYVAICKPLLYPAIMTKA) the chain is on the cytoplasmic side. A helical transmembrane segment spans residues 140-164 (VCWRLVEGLYSLAFLNSLVHTSGLL). Over 165-205 (KLSFCSSNVVNHFFCDNSPLFQISSSSTTLNELLVFIFGSW) the chain is Extracellular. Residues 206 to 226 (FAMSSIITTPISYVFIILTVV) form a helical membrane-spanning segment. The Cytoplasmic segment spans residues 227–239 (RIRSKDGKYKAFS). Residues 240-260 (TCTSHLMAVSLFHGTVIFMYL) form a helical membrane-spanning segment. Topologically, residues 261–271 (RPVKLFSLDTD) are extracellular. Residues 272-292 (KIASLFYTVVIPMLNPLIYSW) traverse the membrane as a helical segment. Over 293-312 (RNKEVKDALRRVIATNVWIH) the chain is Cytoplasmic.

It belongs to the G-protein coupled receptor 1 family.

Its subcellular location is the cell membrane. Functionally, odorant receptor. This is Olfactory receptor-like protein COR5 (COR5) from Gallus gallus (Chicken).